Reading from the N-terminus, the 1288-residue chain is SH3 domain and tetratricopeptide repeat-containing protein 2 (1288 aa).

2 consecutive SH3 domains span residues 176–240 (EGHF…PLPL) and 268–331 (IGRG…PDSY). The span at 386-395 (NPPNDLSASQ) shows a compositional bias: polar residues. Disordered regions lie at residues 386–405 (NPPN…VRPG) and 410–444 (EHQA…LPEP). TPR repeat units follow at residues 528–561 (ARLC…LNGA), 757–790 (RALC…GQLL), 836–869 (GVIY…AQEV), 1001–1037 (GRLL…FIDL), 1084–1118 (LKLY…LARR), 1119–1152 (LKAV…ATLA), 1166–1199 (LVAF…CPPW), and 1210–1244 (AKVY…AVLL).

As to expression, strongly expressed in brain and spinal cord. Expressed at equal level in spinal cord and sciatic nerve. Weakly expressed in striated muscle.

This Homo sapiens (Human) protein is SH3 domain and tetratricopeptide repeat-containing protein 2 (SH3TC2).